Here is a 209-residue protein sequence, read N- to C-terminus: Kynurenine formamidase (209 aa).

Trp-18 provides a ligand contact to substrate. 3 residues coordinate Zn(2+): His-48, His-52, and Asp-54. The active-site Proton donor/acceptor is His-58. Zn(2+) is bound by residues His-160 and Glu-172.

It belongs to the Cyclase 1 superfamily. KynB family. Homodimer. Zn(2+) is required as a cofactor.

It carries out the reaction N-formyl-L-kynurenine + H2O = L-kynurenine + formate + H(+). It functions in the pathway amino-acid degradation; L-tryptophan degradation via kynurenine pathway; L-kynurenine from L-tryptophan: step 2/2. In terms of biological role, catalyzes the hydrolysis of N-formyl-L-kynurenine to L-kynurenine, the second step in the kynurenine pathway of tryptophan degradation. The protein is Kynurenine formamidase of Maricaulis maris (strain MCS10) (Caulobacter maris).